The chain runs to 235 residues: SMN complex subunit yip11/gem2 (235 aa).

The disordered stretch occupies residues M1–N34. The segment covering Q24–N34 has biased composition (polar residues). A phosphoserine mark is found at S117 and S118.

The protein belongs to the gemin-2 family. In terms of assembly, part of the core SMN complex at least composed of smn1, yip11/gem2, gem6, gem7 and gem8. Interacts with smn1; the interaction is direct.

It is found in the nucleus. Its function is as follows. The SMN complex catalyzes the assembly of small nuclear ribonucleoproteins (snRNPs), the building blocks of the spliceosome, and thereby plays an important role in the splicing of cellular pre-mRNAs. Most spliceosomal snRNPs contain a common set of Sm proteins smb1, smd1, smd2, smd3, sme1, smf1 and smg1 that assemble in a heptameric protein ring on the Sm site of the small nuclear RNA to form the core snRNP. In the cytosol, the Sm proteins smd1, smd2, sme1, smf1 and smg1 (5Sm) are trapped in an inactive 6S pICln-Sm complex by the chaperone saf5. To complete assembly of core snRNPs, the SMN complex accepts 5Sm from saf5. Binding of snRNA inside 5Sm ultimately triggers eviction of the SMN complex, thereby allowing binding of smd3 and smb1 to complete assembly of the core snRNP. Within the SMN complex, yip11/gem2 constrains the conformation of 5Sm, thereby promoting 5Sm binding to snRNA containing the snRNP code (a nonameric Sm site and a 3'-adjacent stem-loop), thus preventing progression of assembly until a cognate substrate is bound. The polypeptide is SMN complex subunit yip11/gem2 (yip11) (Schizosaccharomyces pombe (strain 972 / ATCC 24843) (Fission yeast)).